Reading from the N-terminus, the 84-residue chain is MPDADICFMDIKEILAENVRSYRNINNLSQEQLAEISGLHRTYIGSVERKERNVTLSTLIILAKALNTSVPKLLTRQGLKNEQG.

The HTH cro/C1-type domain maps to 19–73 (VRSYRNINNLSQEQLAEISGLHRTYIGSVERKERNVTLSTLIILAKALNTSVPKL). Residues 30-49 (QEQLAEISGLHRTYIGSVER) constitute a DNA-binding region (H-T-H motif).

In terms of biological role, may control expression of its associated restriction-modification system SmaI. The protein is Control protein C.SmaI of Serratia marcescens.